Here is an 876-residue protein sequence, read N- to C-terminus: Alanine--tRNA ligase (876 aa).

The interval 2-461 (SKSTAEIRQA…VDSASEFKGY (460 aa)) is catalytic. K74 is modified (N6-acetyllysine). The editing stretch occupies residues 553–705 (DEARRARIRL…EAVTGEGAIA (153 aa)). Zn(2+) contacts are provided by H564, H568, C666, and H670. Residues 699 to 808 (TGEGAIATVH…STIIVLATVV (110 aa)) are important for oligomerization. A C-Ala domain region spans residues 766 to 875 (IDVNGVKLLV…SVKGWVSAKL (110 aa)).

Belongs to the class-II aminoacyl-tRNA synthetase family. In terms of assembly, homotetramer. Zn(2+) serves as cofactor.

Its subcellular location is the cytoplasm. The enzyme catalyses tRNA(Ala) + L-alanine + ATP = L-alanyl-tRNA(Ala) + AMP + diphosphate. It carries out the reaction (S)-lactate + ATP + H(+) = (S)-lactoyl-AMP + diphosphate. It catalyses the reaction (S)-lactoyl-AMP + L-lysyl-[protein] = N(6)-[(S)-lactoyl]-L-lysyl-[protein] + AMP + 2 H(+). Acetylation at Lys-74 decreases the alanylation activity for tRNA(Ala); a protein that is fully acetylated is inactive in vitro. Catalyzes the attachment of L-alanine to tRNA(Ala) in a two-step reaction: L-alanine is first activated by ATP to form Ala-AMP and then transferred to the acceptor end of tRNA(Ala). AlaRS also incorrectly activates the sterically smaller amino acid glycine as well as the sterically larger amino acid L-serine; generates 2-fold more mischarged Gly than Ser. These mischarged amino acids occur because the of inherent physicochemical limitations on discrimination between closely related amino acids (Ala, Gly and Ser) in the charging step. In presence of high levels of lactate, also acts as a protein lactyltransferase that mediates lactylation of lysine residues in target proteins. Its function is as follows. Edits mischarged Ser-tRNA(Ala) and Gly-tRNA(Ala) but not incorrectly charged Ser-tRNA(Thr). Dtd edits Gly-tRNA(Ala) 4-fold better than does AlaRS. Functionally, attaches Ala to transfer-messenger RNA (tmRNA, also known as 10Sa RNA, the product of the ssrA gene). tmRNA plays a major role in rescue of stalled ribosomes via trans-translation. The polypeptide is Alanine--tRNA ligase (alaS) (Escherichia coli (strain K12)).